A 464-amino-acid chain; its full sequence is Argininosuccinate lyase (464 aa).

It belongs to the lyase 1 family. Argininosuccinate lyase subfamily.

It is found in the cytoplasm. It carries out the reaction 2-(N(omega)-L-arginino)succinate = fumarate + L-arginine. Its pathway is amino-acid biosynthesis; L-arginine biosynthesis; L-arginine from L-ornithine and carbamoyl phosphate: step 3/3. This Herminiimonas arsenicoxydans protein is Argininosuccinate lyase.